The chain runs to 106 residues: DNA-directed RNA polymerase subunit Rpo6 (106 aa).

Belongs to the archaeal Rpo6/eukaryotic RPB6 RNA polymerase subunit family. Part of the RNA polymerase complex.

The protein localises to the cytoplasm. The enzyme catalyses RNA(n) + a ribonucleoside 5'-triphosphate = RNA(n+1) + diphosphate. In terms of biological role, DNA-dependent RNA polymerase (RNAP) catalyzes the transcription of DNA into RNA using the four ribonucleoside triphosphates as substrates. The chain is DNA-directed RNA polymerase subunit Rpo6 from Pyrobaculum aerophilum (strain ATCC 51768 / DSM 7523 / JCM 9630 / CIP 104966 / NBRC 100827 / IM2).